The following is a 108-amino-acid chain: Parvalbumin alpha (108 aa).

A1 bears the N-acetylalanine mark. 2 EF-hand domains span residues 37–72 (MSAN…FAAD) and 76–108 (LTDA…VHEA). The Ca(2+) site is built by D50, D52, S54, F56, E58, E61, D89, D91, D93, K95, and E100.

The protein belongs to the parvalbumin family.

In muscle, parvalbumin is thought to be involved in relaxation after contraction. It binds two calcium ions. The sequence is that of Parvalbumin alpha from Esox lucius (Northern pike).